The sequence spans 165 residues: Transcription elongation factor GreA (165 aa).

The stretch at 55–78 (AAKEEQGKQELRVRQLTQLLENAK) forms a coiled coil.

The protein belongs to the GreA/GreB family.

Functionally, necessary for efficient RNA polymerase transcription elongation past template-encoded arresting sites. The arresting sites in DNA have the property of trapping a certain fraction of elongating RNA polymerases that pass through, resulting in locked ternary complexes. Cleavage of the nascent transcript by cleavage factors such as GreA or GreB allows the resumption of elongation from the new 3'terminus. GreA releases sequences of 2 to 3 nucleotides. This Streptomyces avermitilis (strain ATCC 31267 / DSM 46492 / JCM 5070 / NBRC 14893 / NCIMB 12804 / NRRL 8165 / MA-4680) protein is Transcription elongation factor GreA.